We begin with the raw amino-acid sequence, 184 residues long: MADETKATDAGQRYAQSLFELTIENNQLTKVEADLKSLRAMVAASTDLRRLLESPAFSAEDKAKGLTAVAAKAGFQLLTAKFLGLVASNGRAGDLMGAITAFVEMSAQHRGVVTAEVVTASALTAAQLKGVSTAVASALGKTPEISTRVDPSILGGIKVRVGSRLFDASLRSKLDSLKFALKRA.

This sequence belongs to the ATPase delta chain family. In terms of assembly, F-type ATPases have 2 components, F(1) - the catalytic core - and F(0) - the membrane proton channel. F(1) has five subunits: alpha(3), beta(3), gamma(1), delta(1), epsilon(1). F(0) has three main subunits: a(1), b(2) and c(10-14). The alpha and beta chains form an alternating ring which encloses part of the gamma chain. F(1) is attached to F(0) by a central stalk formed by the gamma and epsilon chains, while a peripheral stalk is formed by the delta and b chains.

The protein resides in the cell inner membrane. Functionally, f(1)F(0) ATP synthase produces ATP from ADP in the presence of a proton or sodium gradient. F-type ATPases consist of two structural domains, F(1) containing the extramembraneous catalytic core and F(0) containing the membrane proton channel, linked together by a central stalk and a peripheral stalk. During catalysis, ATP synthesis in the catalytic domain of F(1) is coupled via a rotary mechanism of the central stalk subunits to proton translocation. Its function is as follows. This protein is part of the stalk that links CF(0) to CF(1). It either transmits conformational changes from CF(0) to CF(1) or is implicated in proton conduction. In Caulobacter sp. (strain K31), this protein is ATP synthase subunit delta.